Reading from the N-terminus, the 806-residue chain is MHALRALDTLCENMEYNFRALEEKWAPIWERDRLFEVDENDSETPRKYVLDMFSYPSGDLHMGHAETYAYGDFIARYWRHRGYNVLHPVGWDSFGLPAENAAIKHGSDPKVWTYRNIDQQARSMRLYAASFDWSRRLHTSDPEYYRWNQWLFLKLYKHGLAYRKKAWVNWDPSDRTVLANEQVLPDGTSERSGALVVKKKLTQWFLRITAYADRLLDDLSMLENNWPERVITMQRNWIGRSEGVSIEFNIPTLKRPVTVFTTRPETIFGVTYLALAFDSEVTEELASKSGVLGELLELRHNIDKTHEGVRGLDLKSFAIHPLTGQSVPIFAASYILSDYAKGAVMSVPGHDTRDERFAVRYNLPIVKIMEDNRLISSGKYSGQSVTQARENITRDLCAKSLGRREISYRLRDWLISRQRYWGTPIPILYDSNGSEIPVEEDDLPVLLPDSEGIDLTPSGLSPLGGIHDWVNLHKAGSLFRRDTDTMDTFFDSSWYFLRYLNPDCDTAPFTLEKAKKWGPVDQYCGGVEHAVLHLLYARFITKFLYDIGFVDFKEPFLRLINQGMVVLNGAKMSKSKGNIVEFSKEVSQHGVDVIRFALIFSGPPEEDIDWKDVSMTGAARFLSRCIQTAKEVPKRTADLSLGDIELRKHTHSLLNDIDWLVDSYRFNVIAARLMDLLNITRKKIQTIGADNPAIREAIETIAIALDMFSPYTAEEMWEILGNKYSVSKALFPEVDTTFLEQKTTCAIVQIDGRLRGRLNVLTNITTEQLVHSARSLPAIEHALSGRSVKRVICVPPKLVNFVVEPK.

A 'HIGH' region motif is present at residues 54 to 64; sequence SYPSGDLHMGH. The short motif at 571-575 is the 'KMSKS' region element; it reads KMSKS. K574 lines the ATP pocket.

It belongs to the class-I aminoacyl-tRNA synthetase family.

Its subcellular location is the cytoplasm. The catalysed reaction is tRNA(Leu) + L-leucine + ATP = L-leucyl-tRNA(Leu) + AMP + diphosphate. This is Leucine--tRNA ligase from Tropheryma whipplei (strain Twist) (Whipple's bacillus).